Reading from the N-terminus, the 130-residue chain is MSLQDPIADLFTRIRNGQSAKKVSVTMPNSKLKVAVAKVLKNEGYIADFAINGDVKPELSIELKYFEGKAVIENIQRVSRPGLRIYKRRDELPKVMGGLGIAIVSTSKGLMTDRAARSAGVGGEIIGFVA.

The protein belongs to the universal ribosomal protein uS8 family. In terms of assembly, part of the 30S ribosomal subunit. Contacts proteins S5 and S12.

In terms of biological role, one of the primary rRNA binding proteins, it binds directly to 16S rRNA central domain where it helps coordinate assembly of the platform of the 30S subunit. In Pseudoalteromonas translucida (strain TAC 125), this protein is Small ribosomal subunit protein uS8.